The sequence spans 156 residues: Small ribosomal subunit protein uS7c (156 aa).

The protein belongs to the universal ribosomal protein uS7 family. Part of the 30S ribosomal subunit.

Its subcellular location is the plastid. It is found in the chloroplast. Functionally, one of the primary rRNA binding proteins, it binds directly to 16S rRNA where it nucleates assembly of the head domain of the 30S subunit. The chain is Small ribosomal subunit protein uS7c (rps7) from Tupiella akineta (Green alga).